A 235-amino-acid chain; its full sequence is Protein mxl-3 (235 aa).

Positions 18–49 are disordered; it reads EKQFRKRHHSDSSDDDSSSPKSASPSMDDDRR. The basic motif stretch occupies residues 47 to 60; that stretch reads DRRAHHNELERRRR. Residues 47-98 enclose the bHLH domain; that stretch reads DRRAHHNELERRRRDHIKDHFTILKDAIPLLDGEKSSRALILKRAVEFIHVM. The tract at residues 61 to 98 is helix-loop-helix motif; sequence DHIKDHFTILKDAIPLLDGEKSSRALILKRAVEFIHVM.

It belongs to the MAX family. As to quaternary structure, may form homodimer. Interacts (via N-terminus) with skn-1 isoforms a and c. In terms of tissue distribution, expressed in the intestine and in the AWC sensory neurons.

It is found in the nucleus. It localises to the cytoplasm. In terms of biological role, transcription factor which regulates the expression of genes involved in lipid metabolism in response to nutrient availability. Binds to the E-box motif 5'-CACGTG-3'. Under well-fed conditions, binds to the promoter and represses the expression of lipase genes lipl-1, lipl-2, lipl-3 and to a lesser extent lipl-5, thereby preventing lipolysis. In response to a high-glucose diet, promotes fatty acid synthesis, elongation and desaturation by up-regulating transcription factor sbp-1 expression. Under well-fed conditions, acts remotely in the intestine to up-regulate the expression of chemoreceptor srh-234 gene in the ADL sensory neuron, possibly by regulating the insulin signaling pathway. The protein is Protein mxl-3 of Caenorhabditis elegans.